The sequence spans 203 residues: MNRLFRLLPLASLVLTACSLHTPQGPGKSPDSPQWRQHQQAVRSLNQFQTRGAFAYLSDEQKVYARFFWQQTGQDRYRLLLTNPLGSTELSLTAQPGSVQLIDNKGQTYTAADAEEMIGRLTGMPIPLNSLRQWIIGLPGDATDYSLDDRYRLRELNYTQNGKTWHVTYGGYTSDTQPALPSNVELNNGAQRIKLKMDNWIVK.

The signal sequence occupies residues 1-17 (MNRLFRLLPLASLVLTA). The N-palmitoyl cysteine moiety is linked to residue Cys18. The S-diacylglycerol cysteine moiety is linked to residue Cys18.

This sequence belongs to the LolB family. Monomer.

It is found in the cell outer membrane. Functionally, plays a critical role in the incorporation of lipoproteins in the outer membrane after they are released by the LolA protein. In Klebsiella pneumoniae subsp. pneumoniae (strain ATCC 700721 / MGH 78578), this protein is Outer-membrane lipoprotein LolB.